The following is a 533-amino-acid chain: Glucose-6-phosphate isomerase (533 aa).

E341 functions as the Proton donor in the catalytic mechanism. Catalysis depends on residues H372 and K501.

Belongs to the GPI family.

Its subcellular location is the cytoplasm. It carries out the reaction alpha-D-glucose 6-phosphate = beta-D-fructose 6-phosphate. It functions in the pathway carbohydrate biosynthesis; gluconeogenesis. It participates in carbohydrate degradation; glycolysis; D-glyceraldehyde 3-phosphate and glycerone phosphate from D-glucose: step 2/4. Catalyzes the reversible isomerization of glucose-6-phosphate to fructose-6-phosphate. The polypeptide is Glucose-6-phosphate isomerase (Cereibacter sphaeroides (strain KD131 / KCTC 12085) (Rhodobacter sphaeroides)).